We begin with the raw amino-acid sequence, 162 residues long: Iron-sulfur cluster assembly protein IscU (162 aa).

It belongs to the NifU family. Homotrimer. Small proportion is monomeric. Interacts with IscS. Interacts with ABCB6. Component of a complex, at least composed of IscS, Isd11 and IscU. [4Fe-4S] cluster is required as a cofactor.

Its subcellular location is the mitochondrion. It participates in cofactor biosynthesis; iron-sulfur cluster biosynthesis. Its function is as follows. Participates in iron-sulfur cluster formation (ISC) pathway for iron-sulfur (Fe-S) cluster biogenesis. Plays a role of a major scaffold protein for [Fe-S] assembly; assembles [4Fe-4S] clusters directly upon interaction with the catalytic component IscS-Isd11 as part of the scaffold complex. Can transfer [4Fe-4S] clusters to target apo-proteins. This is Iron-sulfur cluster assembly protein IscU from Plasmodium falciparum (isolate 3D7).